A 682-amino-acid chain; its full sequence is Putative protein RhsE (682 aa).

Positions 348 to 360 (ENGEREKAQRRSL) are enriched in basic and acidic residues. Residues 348 to 372 (ENGEREKAQRRSLAETLQQEGSENG) form a disordered region.

This sequence belongs to the RHS family.

In terms of biological role, rhs elements have a nonessential function. They may play an important role in the natural ecology of the cell. The sequence is that of Putative protein RhsE (rhsE) from Escherichia coli (strain K12).